A 511-amino-acid polypeptide reads, in one-letter code: Cytochrome P450 93B2 (511 aa).

Residues 4–24 (LQLIFLLFFFPTLLFLYCLPY) form a helical membrane-spanning segment. Residue Cys-447 participates in heme binding.

This sequence belongs to the cytochrome P450 family. Heme is required as a cofactor.

Its subcellular location is the membrane. The enzyme catalyses a flavanone + reduced [NADPH--hemoprotein reductase] + O2 = a flavone + oxidized [NADPH--hemoprotein reductase] + 2 H2O + H(+). Its pathway is secondary metabolite biosynthesis; flavonoid biosynthesis. In terms of biological role, functions as a flavone synthase II (FNSII) that catalyzes the direct conversion of flavanones to flavones. In vitro, can convert liquiritigenin, naringenin and eriodictyol to 7,4'-dihydroxyflavone, apigenin and luteolin, respectively. This is Cytochrome P450 93B2 from Gerbera hybrida (Daisy).